Consider the following 115-residue polypeptide: Prefoldin subunit beta (115 aa).

The protein belongs to the prefoldin subunit beta family. Heterohexamer of two alpha and four beta subunits.

It is found in the cytoplasm. Its function is as follows. Molecular chaperone capable of stabilizing a range of proteins. Seems to fulfill an ATP-independent, HSP70-like function in archaeal de novo protein folding. This is Prefoldin subunit beta from Methanococcus aeolicus (strain ATCC BAA-1280 / DSM 17508 / OCM 812 / Nankai-3).